The chain runs to 96 residues: Class I hydrophobin 2 (96 aa).

The first 15 residues, 1-15, serve as a signal peptide directing secretion; sequence MFKALIVALAAVAAA. Intrachain disulfides connect Cys-28/Cys-77, Cys-34/Cys-71, Cys-35/Cys-55, and Cys-78/Cys-91.

This sequence belongs to the fungal hydrophobin family.

It is found in the secreted. Its subcellular location is the cell wall. Aerial growth, conidiation, and dispersal of filamentous fungi in the environment rely upon a capability of their secreting small amphipathic proteins called hydrophobins (HPBs) with low sequence identity. Class I can self-assemble into an outermost layer of rodlet bundles on aerial cell surfaces, conferring cellular hydrophobicity that supports fungal growth, development and dispersal; whereas Class II form highly ordered films at water-air interfaces through intermolecular interactions but contribute nothing to the rodlet structure. Hyd2 plays a neglectable role in hyphal growth and asexual development and does not seem involved in cellular hydrophobicity, conidial adhesion, stress tolerance nor insect pathogenicity. This Metarhizium robertsii (strain ARSEF 23 / ATCC MYA-3075) (Metarhizium anisopliae (strain ARSEF 23)) protein is Class I hydrophobin 2.